The following is a 93-amino-acid chain: Large ribosomal subunit protein uL23 (93 aa).

It belongs to the universal ribosomal protein uL23 family. In terms of assembly, part of the 50S ribosomal subunit. Contacts protein L29, and trigger factor when it is bound to the ribosome.

Functionally, one of the early assembly proteins it binds 23S rRNA. One of the proteins that surrounds the polypeptide exit tunnel on the outside of the ribosome. Forms the main docking site for trigger factor binding to the ribosome. This chain is Large ribosomal subunit protein uL23, found in Campylobacter jejuni subsp. doylei (strain ATCC BAA-1458 / RM4099 / 269.97).